Here is a 321-residue protein sequence, read N- to C-terminus: Glucokinase (321 aa).

8–13 (GDVGGT) serves as a coordination point for ATP.

It belongs to the bacterial glucokinase family.

The protein localises to the cytoplasm. It carries out the reaction D-glucose + ATP = D-glucose 6-phosphate + ADP + H(+). The chain is Glucokinase from Salmonella typhi.